Consider the following 156-residue polypeptide: ATP synthase subunit b (156 aa).

The chain crosses the membrane as a helical span at residues 7 to 27 (LFAQMVVFLILAWFTMKFVWP).

The protein belongs to the ATPase B chain family. As to quaternary structure, F-type ATPases have 2 components, F(1) - the catalytic core - and F(0) - the membrane proton channel. F(1) has five subunits: alpha(3), beta(3), gamma(1), delta(1), epsilon(1). F(0) has three main subunits: a(1), b(2) and c(10-14). The alpha and beta chains form an alternating ring which encloses part of the gamma chain. F(1) is attached to F(0) by a central stalk formed by the gamma and epsilon chains, while a peripheral stalk is formed by the delta and b chains.

The protein localises to the cell inner membrane. In terms of biological role, f(1)F(0) ATP synthase produces ATP from ADP in the presence of a proton or sodium gradient. F-type ATPases consist of two structural domains, F(1) containing the extramembraneous catalytic core and F(0) containing the membrane proton channel, linked together by a central stalk and a peripheral stalk. During catalysis, ATP synthesis in the catalytic domain of F(1) is coupled via a rotary mechanism of the central stalk subunits to proton translocation. Functionally, component of the F(0) channel, it forms part of the peripheral stalk, linking F(1) to F(0). This Paraburkholderia xenovorans (strain LB400) protein is ATP synthase subunit b.